The sequence spans 438 residues: Argininosuccinate lyase (438 aa).

This sequence belongs to the lyase 1 family. Argininosuccinate lyase subfamily.

Its subcellular location is the cytoplasm. The catalysed reaction is 2-(N(omega)-L-arginino)succinate = fumarate + L-arginine. The protein operates within amino-acid biosynthesis; L-arginine biosynthesis; L-arginine from L-ornithine and carbamoyl phosphate: step 3/3. This Clostridium kluyveri (strain NBRC 12016) protein is Argininosuccinate lyase.